We begin with the raw amino-acid sequence, 798 residues long: Heterogeneous nuclear ribonucleoprotein U (798 aa).

An N-acetylserine modification is found at serine 2. Phosphoserine is present on serine 4. Positions 8–42 (VKKLKVSELKEELKKRRLSDKGLKADLMDRLQAAL) constitute an SAP domain. N6-acetyllysine occurs at positions 17 and 21. Residues 41–229 (ALDNEAGGRP…VKRPREDHGR (189 aa)) form a disordered region. Serine 58 is subject to Phosphoserine. Low complexity-rich tracts occupy residues 71-80 (AGLEQEAAAG) and 103-113 (ENGAAGAADAG). Acidic residues-rich tracts occupy residues 114 to 128 (AMEE…ENGD) and 134 to 147 (EGED…EGAG). The segment covering 153–169 (GEQQSQPPAAAQQASQQ) has biased composition (low complexity). Lysine 179 is modified (N6-acetyllysine). Serine 180 carries the ADP-ribosylserine modification. A compositionally biased stretch (low complexity) spans 192-203 (APPGARQGQQQA). Residues 207 to 229 (GKTEQKAGDKKRGVKRPREDHGR) show a composition bias toward basic and acidic residues. At arginine 229 the chain carries Citrulline. At lysine 239 the chain carries N6-acetyllysine; alternate. Lysine 239 is covalently cross-linked (Glycyl lysine isopeptide (Lys-Gly) (interchain with G-Cter in SUMO1); alternate). A Glycyl lysine isopeptide (Lys-Gly) (interchain with G-Cter in SUMO2); alternate cross-link involves residue lysine 239. The residue at position 240 (tyrosine 240) is a Phosphotyrosine. Phosphoserine occurs at positions 241 and 245. One can recognise a B30.2/SPRY domain in the interval 242-438 (RAKSPQPPVE…VEFNFGQKEK (197 aa)). Threonine 260 carries the phosphothreonine modification. Lysine 326 carries the post-translational modification N6-acetyllysine. The segment at 462-646 (PKGPEEKKDC…QKLLEQYKEE (185 aa)) is ATPase domain. Lysine 469 is covalently cross-linked (Glycyl lysine isopeptide (Lys-Gly) (interchain with G-Cter in SUMO2)). 478-485 (GLPGAGKT) serves as a coordination point for ATP. An N6-acetyllysine; alternate mark is found at lysine 490 and lysine 498. Residues lysine 490 and lysine 498 each participate in a glycyl lysine isopeptide (Lys-Gly) (interchain with G-Cter in SUMO2); alternate cross-link. The residue at position 506 (threonine 506) is a Phosphothreonine. Lysine 510 is covalently cross-linked (Glycyl lysine isopeptide (Lys-Gly) (interchain with G-Cter in SUMO2)). Lysine 525 bears the N6-acetyllysine mark. An N6-acetyllysine; alternate modification is found at lysine 539. A Glycyl lysine isopeptide (Lys-Gly) (interchain with G-Cter in SUMO2); alternate cross-link involves residue lysine 539. Lysine 548 participates in a covalent cross-link: Glycyl lysine isopeptide (Lys-Gly) (interchain with G-Cter in SUMO2). Threonine 556 carries the post-translational modification Phosphothreonine. Glycyl lysine isopeptide (Lys-Gly) (interchain with G-Cter in SUMO2) cross-links involve residues lysine 583 and lysine 600. The interval 585-600 (EDYKQRTQKKAEVEGK) is actin-binding. N6-acetyllysine; alternate is present on lysine 609. Lysine 609 is covalently cross-linked (Glycyl lysine isopeptide (Lys-Gly) (interchain with G-Cter in SUMO2); alternate). A coiled-coil region spans residues 624 to 651 (DEITYVELQKEEAQKLLEQYKEESKKAL). Residues lysine 638 and lysine 644 each participate in a glycyl lysine isopeptide (Lys-Gly) (interchain with G-Cter in SUMO2) cross-link. Over residues 645 to 657 (EESKKALPPEKKQ) the composition is skewed to basic and acidic residues. The interval 645 to 727 (EESKKALPPE…GSGGIGYPYP (83 aa)) is disordered. Arginine 676 bears the Omega-N-methylarginine mark. The span at 684–702 (GGFNMRGGNFRGGAPGNRG) shows a compositional bias: gly residues. Residues 688–713 (MRGGNFRGGAPGNRGGYNRRGNMPQR) form an RNA-binding RGG-box region. 3 positions are modified to asymmetric dimethylarginine: arginine 689, arginine 694, and arginine 701. Arginine 707 and arginine 713 each carry asymmetric dimethylarginine; alternate. An omega-N-methylarginine; alternate mark is found at arginine 707 and arginine 713. Residues 713–723 (RGGGGGSGGIG) show a composition bias toward gly residues. 2 positions are modified to asymmetric dimethylarginine: arginine 728 and arginine 735. The tract at residues 743–772 (NYNRGGMPNRGNYNQNFRGRGNNRGYKNQS) is disordered. Lysine 787 carries the N6-acetyllysine; alternate modification. Lysine 787 is covalently cross-linked (Glycyl lysine isopeptide (Lys-Gly) (interchain with G-Cter in SUMO2); alternate).

Oligomer (via ATPase domain and RNA-binding RGG-box region); oligomerization occurs upon ATP-binding in a chromatin-associated RNAs (caRNAs)- and transcription-dependent manner and is required for chromatin decompaction. ATP hydrolysis is required to cycle from an oligomeric to monomeric state to compact chromatin. Component of the coding region determinant (CRD)-mediated complex, composed of DHX9, HNRNPU, IGF2BP1, SYNCRIP and YBX1. Identified in the spliceosome C complex. Identified in a IGF2BP1-dependent mRNP granule complex containing untranslated mRNAs. Associates with heterogeneous nuclear ribonucleoprotein (hnRNP) particles. Associates (via middle region) with the C-terminal domain (CTD) RNA polymerase II (Pol II) holoenzyme; this association occurs in a RNA-independent manner. Associates (via middle region) with the core-TFIIH basal transcription factor complex; this association inhibits the CTD phosphorylation of RNA polymerase II holoenzyme by down-regulating TFIIH kinase activity. Associates with the telomerase holoenzyme complex. Associates with spindle microtubules (MTs) in a TPX2-dependent manner. Interacts (via C-terminus) with actin; this interaction is direct and mediates association with the phosphorylated CTD of RNA polymerase II and is disrupted in presence of the long non-coding H19 RNA. Interacts with AURKA. Interacts (via C-terminus) with CBX5; this interaction is, at least in part, RNA-dependent. Interacts with CR2. Interacts with CRY1. Interacts (via C-terminus) with EP300; this interaction enhances DNA-binding to nuclear scaffold/matrix attachment region (S/MAR) elements. Interacts with ERBB4. Interacts with GEMIN5. Interacts with IGF2BP1. Interacts with IGF2BP2 and IGF2BP3. Interacts with NCL; this interaction occurs during mitosis. Interacts (via C-terminus) with NR3C1 (via C-terminus). Interacts with PLK1; this interaction induces phosphorylation of HNRNPU at Ser-58 in mitosis. Interacts with POU3F4. Interacts with SMARCA4; this interaction occurs in embryonic stem cells and stimulates global Pol II-mediated transcription. Interacts (via C-terminus) with TOP2A; this interaction protects the topoisomerase TOP2A from degradation and positively regulates the relaxation of supercoiled DNA by TOP2A in a RNA-dependent manner. Interacts with TPX2; this interaction recruits HNRNPU to spindle microtubules (MTs). Interacts with UBQLN2. Interacts (via RNA-binding RGG-box region) with ZBTB7B; the interaction facilitates the recruitment of long non-coding RNA Blnc1 by ZBTB7B. Interacts with ERCC6. In terms of processing, cleaved at Asp-94 by CASP3 during T-cell apoptosis, resulting in a loss of DNA- and chromatin-binding activities. Extensively phosphorylated. Phosphorylated on Ser-58 by PLK1 and dephosphorylated by protein phosphatase 2A (PP2A) in mitosis. Post-translationally, arg-707 and Arg-713 are dimethylated, probably to asymmetric dimethylarginine. In terms of processing, citrullinated by PADI4.

It localises to the nucleus. Its subcellular location is the nucleus matrix. The protein localises to the chromosome. It is found in the nucleus speckle. The protein resides in the cytoplasm. It localises to the cytoskeleton. Its subcellular location is the microtubule organizing center. The protein localises to the centrosome. It is found in the centromere. The protein resides in the kinetochore. It localises to the spindle. Its subcellular location is the spindle pole. The protein localises to the midbody. It is found in the cell surface. The protein resides in the cytoplasmic granule. In terms of biological role, DNA- and RNA-binding protein involved in several cellular processes such as nuclear chromatin organization, telomere-length regulation, transcription, mRNA alternative splicing and stability, Xist-mediated transcriptional silencing and mitotic cell progression. Plays a role in the regulation of interphase large-scale gene-rich chromatin organization through chromatin-associated RNAs (caRNAs) in a transcription-dependent manner, and thereby maintains genomic stability. Required for the localization of the long non-coding Xist RNA on the inactive chromosome X (Xi) and the subsequent initiation and maintenance of X-linked transcriptional gene silencing during X-inactivation. Required for the topoisomerase TOP2A protein stability and activity in a RNA-dependent manner. Plays a role as a RNA polymerase II (Pol II) holoenzyme transcription regulator. Promotes transcription initiation by direct association with the core-TFIIH basal transcription factor complex for the assembly of a functional pre-initiation complex with Pol II in a actin-dependent manner. Blocks Pol II transcription elongation activity by inhibiting the C-terminal domain (CTD) phosphorylation of Pol II and dissociates from Pol II pre-initiation complex prior to productive transcription elongation. Positively regulates CBX5-induced transcriptional gene silencing and retention of CBX5 in the nucleus. Negatively regulates glucocorticoid-mediated transcriptional activation. Key regulator of transcription initiation and elongation in embryonic stem cells upon leukemia inhibitory factor (LIF) signaling. Involved in the long non-coding RNA H19-mediated Pol II transcriptional repression. Participates in the circadian regulation of the core clock component BMAL1 transcription. Plays a role in the regulation of telomere length. Plays a role as a global pre-mRNA alternative splicing modulator by regulating U2 small nuclear ribonucleoprotein (snRNP) biogenesis. Plays a role in mRNA stability. Component of the CRD-mediated complex that promotes MYC mRNA stabilization. Enhances the expression of specific genes, such as tumor necrosis factor TNFA, by regulating mRNA stability, possibly through binding to the 3'-untranslated region (UTR). Plays a role in mitotic cell cycle regulation. Involved in the formation of stable mitotic spindle microtubules (MTs) attachment to kinetochore, spindle organization and chromosome congression. Phosphorylation at Ser-58 by PLK1 is required for chromosome alignement and segregation and progression through mitosis. Also contributes to the targeting of AURKA to mitotic spindle MTs. Binds to double- and single-stranded DNA and RNA, poly(A), poly(C) and poly(G) oligoribonucleotides. Binds to chromatin-associated RNAs (caRNAs). Associates with chromatin to scaffold/matrix attachment region (S/MAR) elements in DNA. Associates with chromatin in a chromatin-associated RNAs (caRNAs)-dependent manner. Binds to the Xist RNA. Binds the long non-coding H19 RNA. Binds to SMN1/2 pre-mRNAs at G/U-rich regions. Binds to small nuclear RNAs (snRNAs). Binds to the 3'-UTR of TNFA mRNA. Binds (via RNA-binding RGG-box region) to the long non-coding Xist RNA; this binding is direct and bridges the Xist RNA and the inactive chromosome X (Xi). Also negatively regulates embryonic stem cell differentiation upon LIF signaling. Required for embryonic development. Binds to brown fat long non-coding RNA 1 (Blnc1); facilitates the recruitment of Blnc1 by ZBTB7B required to drive brown and beige fat development and thermogenesis. This is Heterogeneous nuclear ribonucleoprotein U from Rattus norvegicus (Rat).